The chain runs to 309 residues: Methionyl-tRNA formyltransferase (309 aa).

109-112 (SLLP) serves as a coordination point for (6S)-5,6,7,8-tetrahydrofolate.

It belongs to the Fmt family.

It carries out the reaction L-methionyl-tRNA(fMet) + (6R)-10-formyltetrahydrofolate = N-formyl-L-methionyl-tRNA(fMet) + (6S)-5,6,7,8-tetrahydrofolate + H(+). Its function is as follows. Attaches a formyl group to the free amino group of methionyl-tRNA(fMet). The formyl group appears to play a dual role in the initiator identity of N-formylmethionyl-tRNA by promoting its recognition by IF2 and preventing the misappropriation of this tRNA by the elongation apparatus. The protein is Methionyl-tRNA formyltransferase of Clostridium perfringens (strain SM101 / Type A).